Reading from the N-terminus, the 437-residue chain is Type II methyltransferase M.HgiCII (437 aa).

Residues 4-431 (FRFIDLFAGI…KALPNDHLFE (428 aa)) form the SAM-dependent MTase C5-type domain. The active site involves C75.

Belongs to the class I-like SAM-binding methyltransferase superfamily. C5-methyltransferase family.

The enzyme catalyses a 2'-deoxycytidine in DNA + S-adenosyl-L-methionine = a 5-methyl-2'-deoxycytidine in DNA + S-adenosyl-L-homocysteine + H(+). Its function is as follows. A methylase that recognizes the double-stranded sequence 5'-GGWCC-3', methylates C-? on both strands and protects the DNA from cleavage by the HgiCII endonuclease. The polypeptide is Type II methyltransferase M.HgiCII (Herpetosiphon aurantiacus (Herpetosiphon giganteus)).